The primary structure comprises 253 residues: Ribonuclease HII (253 aa).

Positions D70–L253 constitute an RNase H type-2 domain. A divalent metal cation-binding residues include D76, E77, and D168.

It belongs to the RNase HII family. The cofactor is Mn(2+). Mg(2+) serves as cofactor.

The protein localises to the cytoplasm. The enzyme catalyses Endonucleolytic cleavage to 5'-phosphomonoester.. In terms of biological role, endonuclease that specifically degrades the RNA of RNA-DNA hybrids. The chain is Ribonuclease HII from Leuconostoc mesenteroides subsp. mesenteroides (strain ATCC 8293 / DSM 20343 / BCRC 11652 / CCM 1803 / JCM 6124 / NCDO 523 / NBRC 100496 / NCIMB 8023 / NCTC 12954 / NRRL B-1118 / 37Y).